The following is a 468-amino-acid chain: Cysteine--tRNA ligase (468 aa).

Cysteine 27 provides a ligand contact to Zn(2+). The 'HIGH' region signature appears at 29-39; sequence PTVYDDAHLGH. 3 residues coordinate Zn(2+): cysteine 204, histidine 234, and glutamate 238. The 'KMSKS' region motif lies at 266 to 270; sequence KMSKS. Lysine 269 is a binding site for ATP.

It belongs to the class-I aminoacyl-tRNA synthetase family. Monomer. Zn(2+) is required as a cofactor.

It is found in the cytoplasm. The enzyme catalyses tRNA(Cys) + L-cysteine + ATP = L-cysteinyl-tRNA(Cys) + AMP + diphosphate. This chain is Cysteine--tRNA ligase, found in Campylobacter hominis (strain ATCC BAA-381 / DSM 21671 / CCUG 45161 / LMG 19568 / NCTC 13146 / CH001A).